Consider the following 262-residue polypeptide: Rhomboid-type serine protease 2 (262 aa).

Over Met-1–Ala-16 the chain is Cytoplasmic. The chain crosses the membrane as a helical span at residues Leu-17 to Leu-37. Residues Arg-38–Ser-57 are Lumenal-facing. The chain crosses the membrane as a helical span at residues Leu-58–Ala-78. The Cytoplasmic portion of the chain corresponds to Pro-79–Thr-89. A helical transmembrane segment spans residues Val-90–Leu-110. Residues Gly-111–Lys-112 lie on the Lumenal side of the membrane. Residues Leu-113–Tyr-133 form a helical membrane-spanning segment. The active-site Nucleophile is the Ser-124. The Cytoplasmic segment spans residues Tyr-134–Asp-151. The chain crosses the membrane as a helical span at residues Tyr-152–Ala-168. The Lumenal segment spans residues Val-169–Ser-174. The chain crosses the membrane as a helical span at residues Ser-175 to Tyr-191. His-179 is a catalytic residue. Over Lys-192–Ala-262 the chain is Cytoplasmic. Residues Ser-243–Ala-262 form a disordered region. The span at Asn-252–Ala-262 shows a compositional bias: polar residues.

This sequence belongs to the peptidase S54 family. Interacts with SNX3.

It is found in the golgi apparatus membrane. It localises to the golgi apparatus. The protein localises to the cis-Golgi network membrane. It carries out the reaction Cleaves type-1 transmembrane domains using a catalytic dyad composed of serine and histidine that are contributed by different transmembrane domains.. Probable rhomboid-type serine protease that catalyzes intramembrane proteolysis. This Saccharomyces cerevisiae (strain ATCC 204508 / S288c) (Baker's yeast) protein is Rhomboid-type serine protease 2 (RBD2).